A 269-amino-acid polypeptide reads, in one-letter code: Hydroxyethylthiazole kinase (269 aa).

Residue M46 coordinates substrate. Residues R122 and T168 each contribute to the ATP site. Residue G195 coordinates substrate.

Belongs to the Thz kinase family. Requires Mg(2+) as cofactor.

The enzyme catalyses 5-(2-hydroxyethyl)-4-methylthiazole + ATP = 4-methyl-5-(2-phosphooxyethyl)-thiazole + ADP + H(+). It participates in cofactor biosynthesis; thiamine diphosphate biosynthesis; 4-methyl-5-(2-phosphoethyl)-thiazole from 5-(2-hydroxyethyl)-4-methylthiazole: step 1/1. Its function is as follows. Catalyzes the phosphorylation of the hydroxyl group of 4-methyl-5-beta-hydroxyethylthiazole (THZ). This chain is Hydroxyethylthiazole kinase, found in Chloroflexus aurantiacus (strain ATCC 29366 / DSM 635 / J-10-fl).